A 306-amino-acid chain; its full sequence is Brix domain-containing protein C4F8.04 (306 aa).

The segment at 16–49 (KALHQKNKDKLERRKERAKEEEKDPEKKRLRLSE) is disordered. The span at 21-42 (KNKDKLERRKERAKEEEKDPEK) shows a compositional bias: basic and acidic residues. Residues 94–283 (PKLLVTTSKR…LRMVQKGVWD (190 aa)) form the Brix domain.

The protein is Brix domain-containing protein C4F8.04 of Schizosaccharomyces pombe (strain 972 / ATCC 24843) (Fission yeast).